Here is a 310-residue protein sequence, read N- to C-terminus: Putative S-adenosyl-L-methionine-dependent methyltransferase Franean1_4929 (310 aa).

Residues 1–28 (MSRPSAPRGRTELRSIHERGHERGSAGV) form a disordered region. Residues 9 to 24 (GRTELRSIHERGHERG) are compositionally biased toward basic and acidic residues. S-adenosyl-L-methionine contacts are provided by residues D136 and 165–166 (DL).

It belongs to the UPF0677 family.

Functionally, exhibits S-adenosyl-L-methionine-dependent methyltransferase activity. In Parafrankia sp. (strain EAN1pec), this protein is Putative S-adenosyl-L-methionine-dependent methyltransferase Franean1_4929.